A 394-amino-acid polypeptide reads, in one-letter code: Queuine tRNA-ribosyltransferase (394 aa).

The Proton acceptor role is filled by Asp99. Residues 99–103 (DSGGF), Asp153, Gln195, and Gly222 contribute to the substrate site. The interval 253–259 (GVGHPED) is RNA binding. Residue Asp272 is the Nucleophile of the active site. The RNA binding; important for wobble base 34 recognition stretch occupies residues 277–281 (TRTGR). Cys310, Cys312, Cys315, and His341 together coordinate Zn(2+).

It belongs to the queuine tRNA-ribosyltransferase family. As to quaternary structure, homodimer. Within each dimer, one monomer is responsible for RNA recognition and catalysis, while the other monomer binds to the replacement base PreQ1. Zn(2+) serves as cofactor.

The enzyme catalyses 7-aminomethyl-7-carbaguanine + guanosine(34) in tRNA = 7-aminomethyl-7-carbaguanosine(34) in tRNA + guanine. The protein operates within tRNA modification; tRNA-queuosine biosynthesis. Catalyzes the base-exchange of a guanine (G) residue with the queuine precursor 7-aminomethyl-7-deazaguanine (PreQ1) at position 34 (anticodon wobble position) in tRNAs with GU(N) anticodons (tRNA-Asp, -Asn, -His and -Tyr). Catalysis occurs through a double-displacement mechanism. The nucleophile active site attacks the C1' of nucleotide 34 to detach the guanine base from the RNA, forming a covalent enzyme-RNA intermediate. The proton acceptor active site deprotonates the incoming PreQ1, allowing a nucleophilic attack on the C1' of the ribose to form the product. After dissociation, two additional enzymatic reactions on the tRNA convert PreQ1 to queuine (Q), resulting in the hypermodified nucleoside queuosine (7-(((4,5-cis-dihydroxy-2-cyclopenten-1-yl)amino)methyl)-7-deazaguanosine). The protein is Queuine tRNA-ribosyltransferase of Deinococcus radiodurans (strain ATCC 13939 / DSM 20539 / JCM 16871 / CCUG 27074 / LMG 4051 / NBRC 15346 / NCIMB 9279 / VKM B-1422 / R1).